Here is a 141-residue protein sequence, read N- to C-terminus: Small ribosomal subunit protein uS12 (141 aa).

Belongs to the universal ribosomal protein uS12 family. In terms of assembly, part of the 30S ribosomal subunit.

Its function is as follows. With S4 and S5 plays an important role in translational accuracy. Located at the interface of the 30S and 50S subunits. This Methanobrevibacter smithii (strain ATCC 35061 / DSM 861 / OCM 144 / PS) protein is Small ribosomal subunit protein uS12.